A 659-amino-acid chain; its full sequence is tRNA uridine 5-carboxymethylaminomethyl modification enzyme MnmG (659 aa).

13–18 lines the FAD pocket; the sequence is GGGHAG. 281 to 295 contacts NAD(+); it reads GPRYCPSVEDKINRF.

Belongs to the MnmG family. In terms of assembly, homodimer. Heterotetramer of two MnmE and two MnmG subunits. Requires FAD as cofactor.

The protein resides in the cytoplasm. Functionally, NAD-binding protein involved in the addition of a carboxymethylaminomethyl (cmnm) group at the wobble position (U34) of certain tRNAs, forming tRNA-cmnm(5)s(2)U34. This is tRNA uridine 5-carboxymethylaminomethyl modification enzyme MnmG from Delftia acidovorans (strain DSM 14801 / SPH-1).